We begin with the raw amino-acid sequence, 228 residues long: Orotidine 5'-phosphate decarboxylase (228 aa).

Substrate-binding positions include D10, K33, 60–69 (DLKLYDIPHT), T116, R178, Q187, G207, and R208. Residue K62 is the Proton donor of the active site.

It belongs to the OMP decarboxylase family. Type 1 subfamily. As to quaternary structure, homodimer.

It carries out the reaction orotidine 5'-phosphate + H(+) = UMP + CO2. It functions in the pathway pyrimidine metabolism; UMP biosynthesis via de novo pathway; UMP from orotate: step 2/2. Its function is as follows. Catalyzes the decarboxylation of orotidine 5'-monophosphate (OMP) to uridine 5'-monophosphate (UMP). The chain is Orotidine 5'-phosphate decarboxylase from Oenococcus oeni (strain ATCC BAA-331 / PSU-1).